Reading from the N-terminus, the 158-residue chain is MQGNLSSWLVKHGLVHRSLGFDYQGIETLQIKPEEWHSIAVILYVYGYNYLRSQCAYDVAPGGLLASVYHLTRIEYGIDQPEEVCIKVFAARINPRIPSVFWVWKSADFPERESYDMLGIYYDNHPRLKRILMPESWVGWPLRKDYIAPNFYEIQDAH.

This sequence belongs to the complex I 30 kDa subunit family. In terms of assembly, NDH is composed of at least 16 different subunits, 5 of which are encoded in the nucleus.

The protein resides in the plastid. Its subcellular location is the chloroplast thylakoid membrane. It carries out the reaction a plastoquinone + NADH + (n+1) H(+)(in) = a plastoquinol + NAD(+) + n H(+)(out). The enzyme catalyses a plastoquinone + NADPH + (n+1) H(+)(in) = a plastoquinol + NADP(+) + n H(+)(out). NDH shuttles electrons from NAD(P)H:plastoquinone, via FMN and iron-sulfur (Fe-S) centers, to quinones in the photosynthetic chain and possibly in a chloroplast respiratory chain. The immediate electron acceptor for the enzyme in this species is believed to be plastoquinone. Couples the redox reaction to proton translocation, and thus conserves the redox energy in a proton gradient. The chain is NAD(P)H-quinone oxidoreductase subunit J, chloroplastic from Cucumis sativus (Cucumber).